Here is a 277-residue protein sequence, read N- to C-terminus: Energy-coupling factor transporter ATP-binding protein EcfA1 (277 aa).

Positions 5-240 (LEVENLVFKY…SEDMVEIGLD (236 aa)) constitute an ABC transporter domain. ATP is bound at residue 40-47 (GQNGSGKS). Glutamate 166 acts as the Proton acceptor in catalysis.

The protein belongs to the ABC transporter superfamily. Energy-coupling factor EcfA family. Forms a stable energy-coupling factor (ECF) transporter complex composed of 2 membrane-embedded substrate-binding proteins (S component), 2 ATP-binding proteins (A component) and 2 transmembrane proteins (T component). In L.lactis forms a stable complex with EcfA' and EcfT and substrate-binding components. In E.coli forms a stable complex with EcfA', EcfT and individually with 3 tested substrate-binding components (BioY, NiaX and ThiT) with a stoichiometry of 1.1:1:1. The core ECF complex interacts with a number of substrate-specific binding components, including BioY, BioY2, HmpT, NiaX, PanT, QueT, RibU and ThiT.

Its subcellular location is the cell membrane. In terms of biological role, ATP-binding (A) component of a common energy-coupling factor (ECF) ABC-transporter complex. Unlike classic ABC transporters this ECF transporter provides the energy necessary to transport a number of different substrates. In this organism these probably include biotin, thiamine precursor, niacin, pantothenic acid, queuosine precursor, riboflavin and thiamine. Uptake of niacin or riboflavin into proteosomes containing EcfA1A2T and Niax or RibU has been demonstrated. Uptake requires hydrolyzable Mg-ATP and is substrate-specific; NiaX-containing proteosomes did not transport riboflavin. The protein is Energy-coupling factor transporter ATP-binding protein EcfA1 of Lactococcus lactis subsp. cremoris (strain MG1363).